We begin with the raw amino-acid sequence, 178 residues long: Translation initiation factor IF-3 (178 aa).

This sequence belongs to the IF-3 family. Monomer.

Its subcellular location is the cytoplasm. IF-3 binds to the 30S ribosomal subunit and shifts the equilibrium between 70S ribosomes and their 50S and 30S subunits in favor of the free subunits, thus enhancing the availability of 30S subunits on which protein synthesis initiation begins. The chain is Translation initiation factor IF-3 from Picosynechococcus sp. (strain ATCC 27264 / PCC 7002 / PR-6) (Agmenellum quadruplicatum).